The sequence spans 506 residues: 2-isopropylmalate synthase (506 aa).

The Pyruvate carboxyltransferase domain maps to 4–266; it reads ILFMDTTLRD…EPSMTLKEIK (263 aa). Positions 13, 201, 203, and 237 each coordinate Mn(2+). The interval 390–506 is regulatory domain; sequence NITQLQVHFV…KLKSFIQLVK (117 aa).

This sequence belongs to the alpha-IPM synthase/homocitrate synthase family. LeuA type 1 subfamily. In terms of assembly, homodimer. It depends on Mn(2+) as a cofactor.

The protein resides in the cytoplasm. The catalysed reaction is 3-methyl-2-oxobutanoate + acetyl-CoA + H2O = (2S)-2-isopropylmalate + CoA + H(+). It participates in amino-acid biosynthesis; L-leucine biosynthesis; L-leucine from 3-methyl-2-oxobutanoate: step 1/4. Functionally, catalyzes the condensation of the acetyl group of acetyl-CoA with 3-methyl-2-oxobutanoate (2-ketoisovalerate) to form 3-carboxy-3-hydroxy-4-methylpentanoate (2-isopropylmalate). This Bacillus cereus (strain ZK / E33L) protein is 2-isopropylmalate synthase.